The primary structure comprises 84 residues: Small ribosomal subunit protein bS20 (84 aa).

It belongs to the bacterial ribosomal protein bS20 family.

Binds directly to 16S ribosomal RNA. The chain is Small ribosomal subunit protein bS20 from Levilactobacillus brevis (strain ATCC 367 / BCRC 12310 / CIP 105137 / JCM 1170 / LMG 11437 / NCIMB 947 / NCTC 947) (Lactobacillus brevis).